Reading from the N-terminus, the 396-residue chain is MAKKLFTSESVTEGHPDKICDQISDAILDAIFAKDPNARVACETSVTTGLVLVSGEITTNCYVDIPSTVRQTIREIGYTRAKYGFDADTCAVLTSIGEQSADIALGVDRALEAKNGEMSEEEIEAIGAGDQGMMFGYATNETESYMPLAIDLAHRLARRLSEVRKSDILDYLRPDGKTQVTVEYEDNRPVRIDTIVISTQHHPEATQERIRRDLLEHVVFPVVPSELLDESTRYFINPTGRFVIGGPQGDAGLTGRKIIVDTYGGMARHGGGAFSGKDPTKVDRSAAYAARYVAKNVVAAGLAERCEIQLAYAIGVAQPVSVLVETFGTAKIDEEKIGELVKNNFDLRPAGIIKTLNLRRPIYRQTAAYGHFGRTDLDLPWEKTDKAAALREQAGL.

An ATP-binding site is contributed by His15. A Mg(2+)-binding site is contributed by Asp17. Glu43 contacts K(+). L-methionine contacts are provided by Glu56 and Gln99. Residues Gln99 to Arg109 form a flexible loop region. ATP contacts are provided by residues Asp175 to Lys177, Arg241 to Phe242, Asp250, Arg256 to Lys257, Ala273, and Lys277. Position 250 (Asp250) interacts with L-methionine. Residue Lys281 coordinates L-methionine.

It belongs to the AdoMet synthase family. As to quaternary structure, homotetramer; dimer of dimers. Requires Mg(2+) as cofactor. It depends on K(+) as a cofactor.

It is found in the cytoplasm. The enzyme catalyses L-methionine + ATP + H2O = S-adenosyl-L-methionine + phosphate + diphosphate. It participates in amino-acid biosynthesis; S-adenosyl-L-methionine biosynthesis; S-adenosyl-L-methionine from L-methionine: step 1/1. Its function is as follows. Catalyzes the formation of S-adenosylmethionine (AdoMet) from methionine and ATP. The overall synthetic reaction is composed of two sequential steps, AdoMet formation and the subsequent tripolyphosphate hydrolysis which occurs prior to release of AdoMet from the enzyme. The protein is S-adenosylmethionine synthase of Desulfitobacterium hafniense (strain DSM 10664 / DCB-2).